The sequence spans 578 residues: Zinc finger protein with KRAB and SCAN domains 8 (578 aa).

Positions 1-20 are disordered; that stretch reads MAEESRKPSAPSPPDQTPEE. Residue S12 is modified to Phosphoserine. K26 participates in a covalent cross-link: Glycyl lysine isopeptide (Lys-Gly) (interchain with G-Cter in SUMO2). The SCAN box domain maps to 51–133; the sequence is RLRFRQLCYQ…TLLEDLERQI (83 aa). The interval 158–205 is disordered; sequence ASAPEPPNTQLQSEATQHKSPVPQESQERAMSTSQSPTRSQKGSSGDQ. The segment covering 165-205 has biased composition (polar residues); the sequence is NTQLQSEATQHKSPVPQESQERAMSTSQSPTRSQKGSSGDQ. Residues K176 and K199 each participate in a glycyl lysine isopeptide (Lys-Gly) (interchain with G-Cter in SUMO2) cross-link. S201 is modified (phosphoserine). The region spanning 220 to 316 is the KRAB domain; sequence EKIEDMAVSL…GRLERQRGNP (97 aa). Glycyl lysine isopeptide (Lys-Gly) (interchain with G-Cter in SUMO2) cross-links involve residues K221, K272, and K288. 2 consecutive C2H2-type zinc fingers follow at residues 322–344 and 350–372; these read HKCD…WRIH and YQCN…QDIH. Glycyl lysine isopeptide (Lys-Gly) (interchain with G-Cter in SUMO2) cross-links involve residues K374 and K376. 7 consecutive C2H2-type zinc fingers follow at residues 378 to 400, 406 to 428, 434 to 456, 462 to 484, 490 to 512, 518 to 540, and 546 to 568; these read YHCK…QRIH, YQCN…QRIH, YECN…QRIH, YECD…QRSH, YKCN…QRIH, and YKCK…LRIH. Glycyl lysine isopeptide (Lys-Gly) (interchain with G-Cter in SUMO2) cross-links involve residues K413 and K441. K502 participates in a covalent cross-link: Glycyl lysine isopeptide (Lys-Gly) (interchain with G-Cter in SUMO2). Residue K572 forms a Glycyl lysine isopeptide (Lys-Gly) (interchain with G-Cter in SUMO2) linkage.

This sequence belongs to the krueppel C2H2-type zinc-finger protein family.

It is found in the nucleus. May be involved in transcriptional regulation. This is Zinc finger protein with KRAB and SCAN domains 8 (ZKSCAN8) from Pan troglodytes (Chimpanzee).